Reading from the N-terminus, the 205-residue chain is Lipoprotein MlpB (205 aa).

The first 17 residues, 1–17 (MKIINILFCLLLIVLNS), serve as a signal peptide directing secretion. A lipid anchor (N-palmitoyl cysteine) is attached at Cys18. Residue Cys18 is the site of S-diacylglycerol cysteine attachment.

It belongs to the Multicopy lipoprotein (Mlp) family.

Its subcellular location is the cell outer membrane. Functionally, an outer membrane protein that may participate in pathogenesis. Some human Lyme disease patients have antibodies against this protein. The Mlp proteins probably undergo intragenic recombination, generating new alleles. The polypeptide is Lipoprotein MlpB (Borreliella burgdorferi (strain ATCC 35210 / DSM 4680 / CIP 102532 / B31) (Borrelia burgdorferi)).